We begin with the raw amino-acid sequence, 522 residues long: Flavin-dependent halogenase armH1 (522 aa).

FAD contacts are provided by G16, A19, and E49. S328 and G329 together coordinate chloride. I330 provides a ligand contact to FAD.

This sequence belongs to the flavin-dependent halogenase family.

The enzyme catalyses melleolide F + FADH2 + chloride + O2 = 6'-chloromelleolide F + FAD + 2 H2O + H(+). Flavin-dependent halogenase involved in the biosynthesis of melleolides, a range of antifungal and phytotoxic polyketide derivatives composed of an orsellinic acid (OA) moiety esterified to various sesquiterpene alcohols. The halogenase catalyzes the transfer of a single chlorine atom to the melleolide backbone, resulting in a 6'-chloromelleolide product. The enzyme acts on free substrate and does not depend on carrier-protein-dependent acceptor molecules. This is Flavin-dependent halogenase armH1 from Armillaria mellea (Honey mushroom).